Consider the following 295-residue polypeptide: Pyridoxal 5'-phosphate synthase subunit PdxS (295 aa).

D25 is a D-ribose 5-phosphate binding site. Catalysis depends on K82, which acts as the Schiff-base intermediate with D-ribose 5-phosphate. G154 contributes to the D-ribose 5-phosphate binding site. A D-glyceraldehyde 3-phosphate-binding site is contributed by R166. D-ribose 5-phosphate contacts are provided by residues G215 and 236 to 237 (GS).

It belongs to the PdxS/SNZ family. In the presence of PdxT, forms a dodecamer of heterodimers.

The catalysed reaction is aldehydo-D-ribose 5-phosphate + D-glyceraldehyde 3-phosphate + L-glutamine = pyridoxal 5'-phosphate + L-glutamate + phosphate + 3 H2O + H(+). The protein operates within cofactor biosynthesis; pyridoxal 5'-phosphate biosynthesis. Catalyzes the formation of pyridoxal 5'-phosphate from ribose 5-phosphate (RBP), glyceraldehyde 3-phosphate (G3P) and ammonia. The ammonia is provided by the PdxT subunit. Can also use ribulose 5-phosphate and dihydroxyacetone phosphate as substrates, resulting from enzyme-catalyzed isomerization of RBP and G3P, respectively. This chain is Pyridoxal 5'-phosphate synthase subunit PdxS, found in Staphylococcus carnosus (strain TM300).